A 315-amino-acid chain; its full sequence is Olfactory receptor 3A1 (315 aa).

Residues 1–28 lie on the Extracellular side of the membrane; sequence MQPESGANGTVIAEFILLGLLEAPGLQP. An N-linked (GlcNAc...) asparagine glycan is attached at asparagine 8. Residues 29-52 traverse the membrane as a helical segment; it reads VVFVLFLFAYLVTVGGNLSILAAV. Residues 53 to 60 are Cytoplasmic-facing; that stretch reads LVEPELHT. The helical transmembrane segment at 61–82 threads the bilayer; that stretch reads PMYFFLGNLSVLDVGCISVTVP. The Extracellular portion of the chain corresponds to 83–103; sequence SMLSRLLSRKRAVPCGACLTQ. Residues cysteine 100 and cysteine 192 are joined by a disulfide bond. The helical transmembrane segment at 104–123 threads the bilayer; sequence LFFFHLFVGVDCFLLIAMAY. At 124-143 the chain is on the cytoplasmic side; it reads DRFLAICRPLTYSTRMSQTV. Residues 144–161 traverse the membrane as a helical segment; the sequence is QRMLVAASWACAFTNALT. At 162–199 the chain is on the extracellular side; it reads HTVAMSTLNFCGPNVINHFYCDLPQLCQLSCSSTQLSE. The helical transmembrane segment at 200–223 threads the bilayer; that stretch reads LLLFAVGFIMAGTSMALIVISYIH. Topologically, residues 224 to 240 are cytoplasmic; sequence VAAAVLRIRSVEGRKKA. Residues 241 to 264 form a helical membrane-spanning segment; that stretch reads FSTCGSHLTVVAIFYGSGIFNYMR. The Extracellular portion of the chain corresponds to 265-275; that stretch reads LGSTKLSDKDK. A helical membrane pass occupies residues 276–295; sequence AVGIFNTVINPMLNPIIYSF. The Cytoplasmic portion of the chain corresponds to 296 to 315; that stretch reads RNPDVQSAIWRMLTGRRSLA.

It belongs to the G-protein coupled receptor 1 family.

It is found in the cell membrane. Functionally, odorant receptor. This Gorilla gorilla gorilla (Western lowland gorilla) protein is Olfactory receptor 3A1 (OR3A1).